The chain runs to 828 residues: MKLSRRSFMKANAVAAAAAAAGLSVPGVARAVVGQQEAIKWDKAPCRFCGTGCGVLVGTQQGRVVACQGDPDAPVNRGLNCIKGYFLPKIMYGKDRLTQPMLRMKDGKYHKDGEFTPVSWDQAFDVMEEKFKTSLKEKGPEAIGMFGSGQWTIWEGYAAAKLFKAGFRSNNIDPNARHCMASAVVGFMRTFGMDEPMGCYDDIEQADAFVLWGSNMAEMHPILWSRITNRRLSDPNVKVAVLSTFQHRSFELADNGIVFTPQSDLMILNYIANYIIQHDAVNQDFFTKHVNLRKGATDIGYGLRPTHPLEKAAKNPGSDASGPMSFDEYKAFVAEYTLDKTAAMTGVPKDQLEQLAQLYADPNKRVISYWTMGFNQHTRGVWANNLVYNLHLLTGKISQPGCGPFSLTGQPSACGTAREVGTFSHRLPADMVVTNEKHRDICEKHWQIPAGTIPAKVGLHAVAQDRALKDGKLNVYWVMCNNNMQAGPNINEDRMPGWRDPRNFIIVSDPYPTVSALSADLILPTAMWVEKEGAYGNAERRTQFWRQQIKAPGEAKSDLWQLVQFSRRFKTEEVWPEALLAQKPELRGKTLYDVLFATPAVSKFPLSELKEDQLNDESRELGFYLQKGLFEEYAWFGRGHGHDLAPFDDYHNARGLRWPVVDGKETQWRYSEGNDPYVKAGEGYKFYGKPDGKAVIFALPFEPAAESPDNEYDLWLSTGRVLEHWHTGSMTRRVPELHRAFPEAVVFIHPLDAKARDLRRGDKVKVSSRRGEVISFVETRGRNRPPQGLVYMPFFDAAQLVNNLTLDATDPLSKETDFKKCAVKLAKV.

Residues 1-31 (MKLSRRSFMKANAVAAAAAAAGLSVPGVARA) constitute a signal peptide (tat-type signal). The 4Fe-4S Mo/W bis-MGD-type domain occupies 39–95 (IKWDKAPCRFCGTGCGVLVGTQQGRVVACQGDPDAPVNRGLNCIKGYFLPKIMYGKD). [4Fe-4S] cluster is bound by residues C46, C49, C53, and C81. Residues K83, Q150, N175, C179, 212-219 (WGSNMAEM), 243-247 (STFQH), 262-264 (QSD), M372, Q376, N482, 508-509 (SD), K531, D558, and 718-727 (TGRVLEHWHT) contribute to the Mo-bis(molybdopterin guanine dinucleotide) site. F794 lines the substrate pocket. The Mo-bis(molybdopterin guanine dinucleotide) site is built by N802 and K819.

This sequence belongs to the prokaryotic molybdopterin-containing oxidoreductase family. NasA/NapA/NarB subfamily. Component of the periplasmic nitrate reductase NapAB complex composed of NapA and NapB. It depends on [4Fe-4S] cluster as a cofactor. Mo-bis(molybdopterin guanine dinucleotide) is required as a cofactor. Predicted to be exported by the Tat system. The position of the signal peptide cleavage has not been experimentally proven.

It is found in the periplasm. The catalysed reaction is 2 Fe(II)-[cytochrome] + nitrate + 2 H(+) = 2 Fe(III)-[cytochrome] + nitrite + H2O. In terms of biological role, catalytic subunit of the periplasmic nitrate reductase complex NapAB. Receives electrons from NapB and catalyzes the reduction of nitrate to nitrite. The protein is Periplasmic nitrate reductase of Salmonella arizonae (strain ATCC BAA-731 / CDC346-86 / RSK2980).